A 254-amino-acid chain; its full sequence is Alcohol dehydrogenase (254 aa).

Phe10–Leu33 contributes to the NAD(+) binding site. Residue Ser138 participates in substrate binding. The active-site Proton acceptor is Tyr151.

This sequence belongs to the short-chain dehydrogenases/reductases (SDR) family. In terms of assembly, homodimer.

It catalyses the reaction a primary alcohol + NAD(+) = an aldehyde + NADH + H(+). The enzyme catalyses a secondary alcohol + NAD(+) = a ketone + NADH + H(+). The sequence is that of Alcohol dehydrogenase (Adh) from Drosophila persimilis (Fruit fly).